Reading from the N-terminus, the 668-residue chain is Threonine--tRNA ligase (668 aa).

Residues 1 to 64 form the TGS domain; sequence MSQSVSLTFP…TDGKIEIITR (64 aa). The tract at residues 245–553 is catalytic; sequence DHRKLGREMD…LIENFAGHMP (309 aa). 3 residues coordinate Zn(2+): C347, H398, and H530.

This sequence belongs to the class-II aminoacyl-tRNA synthetase family. In terms of assembly, homodimer. The cofactor is Zn(2+).

The protein resides in the cytoplasm. It catalyses the reaction tRNA(Thr) + L-threonine + ATP = L-threonyl-tRNA(Thr) + AMP + diphosphate + H(+). In terms of biological role, catalyzes the attachment of threonine to tRNA(Thr) in a two-step reaction: L-threonine is first activated by ATP to form Thr-AMP and then transferred to the acceptor end of tRNA(Thr). Also edits incorrectly charged L-seryl-tRNA(Thr). This chain is Threonine--tRNA ligase, found in Rhizobium etli (strain ATCC 51251 / DSM 11541 / JCM 21823 / NBRC 15573 / CFN 42).